The sequence spans 510 residues: Ectonucleoside triphosphate diphosphohydrolase 1 (510 aa).

At 1–16 (MEDRRESELKTFCSKN) the chain is on the cytoplasmic side. Residues 17-37 (ILVILGFSSIIAVIALLALGL) traverse the membrane as a helical segment. Topologically, residues 38–477 (TQNKPLPENV…SSTRLSHSTY (440 aa)) are extracellular. Asn-73 carries an N-linked (GlcNAc...) asparagine glycan. Cys-84 and Cys-108 are joined by a disulfide. Glu-174 functions as the Proton acceptor in the catalytic mechanism. Residues Asn-245, Asn-274, Asn-291, and Asn-333 are each glycosylated (N-linked (GlcNAc...) asparagine). 2 disulfides stabilise this stretch: Cys-255–Cys-300 and Cys-281–Cys-324. A disulfide bridge connects residues Cys-337 and Cys-342. N-linked (GlcNAc...) asparagine glycosylation is present at Asn-370. A disulfide bond links Cys-390 and Cys-413. N-linked (GlcNAc...) asparagine glycosylation is present at Asn-457. The helical transmembrane segment at 478–498 (VFLMVLFSLILVIVVIIGLFV) threads the bilayer. At 499-510 (CHRPSYFWKDMV) the chain is on the cytoplasmic side.

It belongs to the GDA1/CD39 NTPase family. Homodimer; disulfide-linked. Ca(2+) is required as a cofactor. Requires Mg(2+) as cofactor. In terms of processing, N-glycosylated. Post-translationally, cleaved into two polypeptides that seem to stay together by non-covalent interactions. The N-terminus is blocked. In terms of processing, palmitoylated on Cys-13; which is required for caveola targeting. Highest expression found in vascular endothelium, smooth muscle, spleen and lung (at protein level). High expression also found in stomach, duodenum, kidney, lymph node and aorta (at protein level).

The protein localises to the membrane. Its subcellular location is the caveola. It carries out the reaction a ribonucleoside 5'-triphosphate + 2 H2O = a ribonucleoside 5'-phosphate + 2 phosphate + 2 H(+). It catalyses the reaction a ribonucleoside 5'-triphosphate + H2O = a ribonucleoside 5'-diphosphate + phosphate + H(+). The enzyme catalyses a ribonucleoside 5'-diphosphate + H2O = a ribonucleoside 5'-phosphate + phosphate + H(+). The catalysed reaction is ATP + 2 H2O = AMP + 2 phosphate + 2 H(+). It carries out the reaction ATP + H2O = ADP + phosphate + H(+). It catalyses the reaction ADP + H2O = AMP + phosphate + H(+). The enzyme catalyses CTP + 2 H2O = CMP + 2 phosphate + 2 H(+). The catalysed reaction is CTP + H2O = CDP + phosphate + H(+). It carries out the reaction CDP + H2O = CMP + phosphate + H(+). It catalyses the reaction GTP + 2 H2O = GMP + 2 phosphate + 2 H(+). The enzyme catalyses GTP + H2O = GDP + phosphate + H(+). The catalysed reaction is GDP + H2O = GMP + phosphate + H(+). It carries out the reaction ITP + 2 H2O = IMP + 2 phosphate + 2 H(+). It catalyses the reaction ITP + H2O = IDP + phosphate + H(+). The enzyme catalyses IDP + H2O = IMP + phosphate + H(+). The catalysed reaction is UTP + 2 H2O = UMP + 2 phosphate + 2 H(+). It carries out the reaction UTP + H2O = UDP + phosphate + H(+). It catalyses the reaction UDP + H2O = UMP + phosphate + H(+). With respect to regulation, the ATP diphosphohydrolase activity is decreased by half by sodium azide. Its function is as follows. Catalyzes the hydrolysis of both di- and triphosphate nucleotides (NDPs and NTPs) and hydrolyze NTPs to nucleotide monophosphates (NMPs) in two distinct successive phosphate-releasing steps, with NDPs as intermediates and participates in the regulation of extracellular levels of nucleotides. By hydrolyzing proinflammatory ATP and platelet-activating ADP to AMP, it blocks platelet aggregation and supports blood flow. This is Ectonucleoside triphosphate diphosphohydrolase 1 from Sus scrofa (Pig).